Reading from the N-terminus, the 172-residue chain is 3-hydroxydecanoyl-[acyl-carrier-protein] dehydratase (172 aa).

Residue His-71 is part of the active site.

This sequence belongs to the thioester dehydratase family. FabA subfamily. In terms of assembly, homodimer.

It localises to the cytoplasm. The catalysed reaction is a (3R)-hydroxyacyl-[ACP] = a (2E)-enoyl-[ACP] + H2O. The enzyme catalyses (3R)-hydroxydecanoyl-[ACP] = (2E)-decenoyl-[ACP] + H2O. It catalyses the reaction (2E)-decenoyl-[ACP] = (3Z)-decenoyl-[ACP]. The protein operates within lipid metabolism; fatty acid biosynthesis. Its function is as follows. Necessary for the introduction of cis unsaturation into fatty acids. Catalyzes the dehydration of (3R)-3-hydroxydecanoyl-ACP to E-(2)-decenoyl-ACP and then its isomerization to Z-(3)-decenoyl-ACP. Can catalyze the dehydratase reaction for beta-hydroxyacyl-ACPs with saturated chain lengths up to 16:0, being most active on intermediate chain length. In Blochmanniella pennsylvanica (strain BPEN), this protein is 3-hydroxydecanoyl-[acyl-carrier-protein] dehydratase.